A 509-amino-acid chain; its full sequence is Glutamate--tRNA ligase (509 aa).

A 'HIGH' region motif is present at residues 20 to 30 (PSPTGFPHVGT). 4 residues coordinate Zn(2+): Cys-117, Cys-119, Cys-144, and His-146. The 'KMSKS' region motif lies at 261–265 (KLSKR). ATP is bound at residue Lys-264.

The protein belongs to the class-I aminoacyl-tRNA synthetase family. Glutamate--tRNA ligase type 1 subfamily. As to quaternary structure, monomer. Zn(2+) is required as a cofactor.

Its subcellular location is the cytoplasm. It carries out the reaction tRNA(Glu) + L-glutamate + ATP = L-glutamyl-tRNA(Glu) + AMP + diphosphate. Functionally, catalyzes the attachment of glutamate to tRNA(Glu) in a two-step reaction: glutamate is first activated by ATP to form Glu-AMP and then transferred to the acceptor end of tRNA(Glu). In Psychrobacter cryohalolentis (strain ATCC BAA-1226 / DSM 17306 / VKM B-2378 / K5), this protein is Glutamate--tRNA ligase.